The primary structure comprises 329 residues: N-acetyl-gamma-glutamyl-phosphate reductase (329 aa).

Cysteine 155 is a catalytic residue.

This sequence belongs to the NAGSA dehydrogenase family. Type 1 subfamily.

It is found in the cytoplasm. The enzyme catalyses N-acetyl-L-glutamate 5-semialdehyde + phosphate + NADP(+) = N-acetyl-L-glutamyl 5-phosphate + NADPH + H(+). It functions in the pathway amino-acid biosynthesis; L-arginine biosynthesis; N(2)-acetyl-L-ornithine from L-glutamate: step 3/4. In terms of biological role, catalyzes the NADPH-dependent reduction of N-acetyl-5-glutamyl phosphate to yield N-acetyl-L-glutamate 5-semialdehyde. The chain is N-acetyl-gamma-glutamyl-phosphate reductase from Shewanella pealeana (strain ATCC 700345 / ANG-SQ1).